Reading from the N-terminus, the 134-residue chain is Translation initiation factor 2 subunit beta (134 aa).

Residues 1 to 12 (MGYEEQLDRALE) show a composition bias toward basic and acidic residues. Positions 1–32 (MGYEEQLDRALEETPDIEGTAARFSVPDPDVR) are disordered.

The protein belongs to the eIF-2-beta/eIF-5 family. Heterotrimer composed of an alpha, a beta and a gamma chain.

Functionally, eIF-2 functions in the early steps of protein synthesis by forming a ternary complex with GTP and initiator tRNA. The polypeptide is Translation initiation factor 2 subunit beta (Natronomonas pharaonis (strain ATCC 35678 / DSM 2160 / CIP 103997 / JCM 8858 / NBRC 14720 / NCIMB 2260 / Gabara) (Halobacterium pharaonis)).